The following is a 117-amino-acid chain: Ig heavy chain V region 108A (117 aa).

A signal peptide spans 1 to 19 (MGWSWIFLFLLSGTAGVHS). Residues 20–117 (EVQLQQSGPE…EDSAVYYCAR (98 aa)) enclose the Ig-like domain.

In Mus musculus (Mouse), this protein is Ig heavy chain V region 108A (Igh-VJ558).